The chain runs to 189 residues: MAGKQPPPLMKKHSQTDLVSRLKTRKILGVGGEDDDGEVHRSKISQVLGNEIKFAVREPLGLRVWQFLSAMLFSSVAIMALALPDQLYDAVFDGAEVTSKTPIRLYGGALLSISLIMWNALYTAEKVIIRWTLLTEACYFGVQSLVVTATLAETGLMSLGTVLLLASRLLFVIVSIYYYYQVGRKPKKV.

At 1-63 (MAGKQPPPLM…FAVREPLGLR (63 aa)) the chain is on the cytoplasmic side. The residue at position 14 (Ser14) is a Phosphoserine. A helical transmembrane segment spans residues 64-84 (VWQFLSAMLFSSVAIMALALP). The Extracellular portion of the chain corresponds to 85–108 (DQLYDAVFDGAEVTSKTPIRLYGG). A helical transmembrane segment spans residues 109 to 129 (ALLSISLIMWNALYTAEKVII). Residue Arg130 is a topological domain, cytoplasmic. The helical transmembrane segment at 131-151 (WTLLTEACYFGVQSLVVTATL) threads the bilayer. The Extracellular portion of the chain corresponds to 152–155 (AETG). A helical transmembrane segment spans residues 156–176 (LMSLGTVLLLASRLLFVIVSI). Over 177–189 (YYYYQVGRKPKKV) the chain is Cytoplasmic.

Its subcellular location is the membrane. This is Tumor protein p53-inducible protein 11 (Trp53i11) from Mus musculus (Mouse).